The primary structure comprises 147 residues: Hemoglobin subunit epsilon (147 aa).

The Globin domain maps to 3-147 (HWSAEEKQLI…VAHALARKYH (145 aa)). Residues His64 and His93 each contribute to the heme b site.

It belongs to the globin family. As to quaternary structure, heterotetramer of two epsilon chains and two alpha chains. Hemoglobin E (Hbe) contains a alpha-A chains while hemoglobin M (Hbm) contains alpha-D chains.

Its function is as follows. Beta-type chain found in early embryos. In Gallus gallus (Chicken), this protein is Hemoglobin subunit epsilon (HBE).